The following is a 371-amino-acid chain: 3-dehydroquinate synthase (371 aa).

NAD(+) is bound by residues 114 to 118 (GVVGD), 138 to 139 (TT), Lys-151, Lys-160, and 178 to 181 (TLNT). Positions 193, 258, and 275 each coordinate Zn(2+).

It belongs to the sugar phosphate cyclases superfamily. Dehydroquinate synthase family. Co(2+) serves as cofactor. Requires Zn(2+) as cofactor. It depends on NAD(+) as a cofactor.

The protein resides in the cytoplasm. It carries out the reaction 7-phospho-2-dehydro-3-deoxy-D-arabino-heptonate = 3-dehydroquinate + phosphate. The protein operates within metabolic intermediate biosynthesis; chorismate biosynthesis; chorismate from D-erythrose 4-phosphate and phosphoenolpyruvate: step 2/7. Its function is as follows. Catalyzes the conversion of 3-deoxy-D-arabino-heptulosonate 7-phosphate (DAHP) to dehydroquinate (DHQ). The polypeptide is 3-dehydroquinate synthase (Synechococcus sp. (strain CC9605)).